The chain runs to 86 residues: Alpha-mammal toxin Ts3 (86 aa).

The signal sequence occupies residues 1-19 (MNYFILLVVVCLLTAGTEG). One can recognise an LCN-type CS-alpha/beta domain in the interval 21–82 (KDGYPVEYDN…EPTKTNGKCK (62 aa)). Intrachain disulfides connect Cys31–Cys81, Cys35–Cys57, Cys43–Cys64, and Cys47–Cys66. Residue Ser83 is modified to Serine amide.

In terms of tissue distribution, expressed by the venom gland.

The protein resides in the secreted. Alpha toxins bind voltage-independently at site-3 of sodium channels (Nav) and inhibit the inactivation of the activated channels, thereby blocking neuronal transmission. This synthetic toxin inhibits inactivation of rat Nav1.4/SCN4A (when tested at 201 nM). In addition, it has been shown to cause a persistent sodium channel activation in nitrergic inhibitory fibers innervating the rabbit corpus cavernosum, resulting in NO release and cavernosal smooth muscle relaxation. This toxin is active against mammals. In terms of biological role, this synthetic peptide with a Ser at position 31 (C12S) acts as a bradykinin-potentiating peptide (BPP). Induces endothelium-dependent vasodilation that is reverted by NO synthase inhibitor, suggesting it activates molecular targets on vascular endothelium leading to NO production and vasodilation. It appears to induce vasodilation through muscarinic acetylcholine receptors (AChR) M2 (CHRM2) and M3 (CHRM3). Does not inhibit the angiotensin-converting enzyme (ACE). Does not act via bradykinin B2 receptor. This Tityus serrulatus (Brazilian scorpion) protein is Alpha-mammal toxin Ts3.